Consider the following 785-residue polypeptide: Probable serine protease Ga0098714_109514 (785 aa).

2 stretches are compositionally biased toward basic and acidic residues: residues 470–481 (LDHGKNGREGGR) and 491–501 (DGPEHPNHYAD). Disordered regions lie at residues 470–503 (LDHGKNGREGGRDVSAGPHGSDGPEHPNHYADID) and 608–629 (DGDASRTVTRHHPRTGEDEEVS).

The protein belongs to the peptidase S1 family.

Functionally, probably a dedicated protease for substrate gasdermin bGSDM; cleaves the bGSDM precursor, releasing the pore-forming moiety, which integrates into the membrane and triggers cell death. Involved in defense against bacteriophages. Expression of gasdermin bGSDM and this neighboring protease is toxic in E.coli on solid medium. In Bradyrhizobium tropiciagri, this protein is Probable serine protease Ga0098714_109514.